The sequence spans 354 residues: Type II methylase M.HgiDII (354 aa).

The SAM-dependent MTase C5-type domain maps to 3-344 (GAVIDLFCGV…KSIKRFLEGL (342 aa)). The active site involves Cys79.

It belongs to the class I-like SAM-binding methyltransferase superfamily. C5-methyltransferase family.

It catalyses the reaction a 2'-deoxycytidine in DNA + S-adenosyl-L-methionine = a 5-methyl-2'-deoxycytidine in DNA + S-adenosyl-L-homocysteine + H(+). Functionally, a methylase that recognizes the double-stranded sequence 5'-GTCGAC-3', methylates C-? on both strands and protects the DNA from cleavage by the HgiDII endonuclease. This chain is Type II methylase M.HgiDII, found in Herpetosiphon aurantiacus (Herpetosiphon giganteus).